The primary structure comprises 66 residues: DNA gyrase inhibitor YacG (66 aa).

Residues Cys9, Cys12, Cys28, and Cys32 each coordinate Zn(2+). Residues 45–66 (HKIAGSEGSEDELYSGDLEPRH) form a disordered region.

Belongs to the DNA gyrase inhibitor YacG family. As to quaternary structure, interacts with GyrB. Zn(2+) is required as a cofactor.

Functionally, inhibits all the catalytic activities of DNA gyrase by preventing its interaction with DNA. Acts by binding directly to the C-terminal domain of GyrB, which probably disrupts DNA binding by the gyrase. The protein is DNA gyrase inhibitor YacG of Pseudomonas putida (strain ATCC 700007 / DSM 6899 / JCM 31910 / BCRC 17059 / LMG 24140 / F1).